We begin with the raw amino-acid sequence, 489 residues long: UBX domain-containing protein 7 (489 aa).

Alanine 2 bears the N-acetylalanine mark. Residues alanine 2–glycine 54 form the UBA domain. Residues alanine 56–valine 77 are disordered. Residues proline 59–arginine 70 are compositionally biased toward polar residues. Lysine 84 participates in a covalent cross-link: Glycyl lysine isopeptide (Lys-Gly) (interchain with G-Cter in SUMO2). Lysine 99 is covalently cross-linked (Glycyl lysine isopeptide (Lys-Gly) (interchain with G-Cter in ubiquitin)). Residue lysine 134 forms a Glycyl lysine isopeptide (Lys-Gly) (interchain with G-Cter in SUMO2) linkage. Phosphoserine is present on residues serine 278, serine 280, serine 285, and serine 288. Residues serine 285–aspartate 304 form the UIM domain. Over residues glutamate 300–lysine 309 the composition is skewed to polar residues. Residues glutamate 300 to leucine 384 form a disordered region. Phosphothreonine is present on threonine 306. The span at histidine 352 to leucine 366 shows a compositional bias: basic and acidic residues. The region spanning valine 408–valine 485 is the UBX domain.

In terms of assembly, interacts with neddylated CUL2, ubiquitinated HIF1A, and VCP/p97.

It is found in the nucleus. Ubiquitin-binding adapter that links a subset of NEDD8-associated cullin ring ligases (CRLs) to the segregase VCP/p97, to regulate turnover of their ubiquitination substrates. The chain is UBX domain-containing protein 7 (UBXN7) from Homo sapiens (Human).